The following is a 299-amino-acid chain: Pyridoxal 5'-phosphate synthase subunit PdxS (299 aa).

D24 lines the D-ribose 5-phosphate pocket. K81 functions as the Schiff-base intermediate with D-ribose 5-phosphate in the catalytic mechanism. Residue G153 coordinates D-ribose 5-phosphate. R165 is a D-glyceraldehyde 3-phosphate binding site. D-ribose 5-phosphate contacts are provided by residues G219 and 240–241 (GS).

Belongs to the PdxS/SNZ family. As to quaternary structure, in the presence of PdxT, forms a dodecamer of heterodimers.

It catalyses the reaction aldehydo-D-ribose 5-phosphate + D-glyceraldehyde 3-phosphate + L-glutamine = pyridoxal 5'-phosphate + L-glutamate + phosphate + 3 H2O + H(+). It functions in the pathway cofactor biosynthesis; pyridoxal 5'-phosphate biosynthesis. Its function is as follows. Catalyzes the formation of pyridoxal 5'-phosphate from ribose 5-phosphate (RBP), glyceraldehyde 3-phosphate (G3P) and ammonia. The ammonia is provided by the PdxT subunit. Can also use ribulose 5-phosphate and dihydroxyacetone phosphate as substrates, resulting from enzyme-catalyzed isomerization of RBP and G3P, respectively. The chain is Pyridoxal 5'-phosphate synthase subunit PdxS from Methanococcus vannielii (strain ATCC 35089 / DSM 1224 / JCM 13029 / OCM 148 / SB).